The primary structure comprises 196 residues: MVSWWQALTRAAGRYPWPANVLLYAGFFSGGDALQQVLRGGPADWQHTRHVATVAVAFHANLNYVWLNLLERALPGRAPRTILAKVLCDQALGGPVYVSTFYAGMSILQGKDDIFLDMRQKFWNTYKSGLMYWPFVQLINFSLIPIRWRTAYTGLCGFLWATFLCFSQQEGDGTFKSAFTFRRIKVTNEVEKPSEK.

The Cytoplasmic portion of the chain corresponds to 1 to 16 (MVSWWQALTRAAGRYP). A targeting to peroxisomes region spans residues 16–55 (PWPANVLLYAGFFSGGDALQQVLRGGPADWQHTRHVATVA). A helical membrane pass occupies residues 17–34 (WPANVLLYAGFFSGGDAL). The Lumenal portion of the chain corresponds to 35–50 (QQVLRGGPADWQHTRH). The helical transmembrane segment at 51 to 67 (VATVAVAFHANLNYVWL) threads the bilayer. The Cytoplasmic portion of the chain corresponds to 68 to 90 (NLLERALPGRAPRTILAKVLCDQ). Residues 91 to 108 (ALGGPVYVSTFYAGMSIL) traverse the membrane as a helical segment. Residues 109–150 (QGKDDIFLDMRQKFWNTYKSGLMYWPFVQLINFSLIPIRWRT) lie on the Lumenal side of the membrane. Residues 151–167 (AYTGLCGFLWATFLCFS) traverse the membrane as a helical segment. At 168–196 (QQEGDGTFKSAFTFRRIKVTNEVEKPSEK) the chain is on the cytoplasmic side.

Belongs to the peroxisomal membrane protein PXMP2/4 family.

It localises to the peroxisome membrane. Its function is as follows. Participates in reactive oxygen species metabolism by up- or down-regulation of the genes of antioxidant enzymes. Protective against the mitochondrial apoptotic cascade. The chain is Mpv17-like protein (MPV17L) from Bos taurus (Bovine).